We begin with the raw amino-acid sequence, 4574 residues long: E3 ubiquitin-protein ligase MYCBP2 (4574 aa).

2 disordered regions span residues 92 to 115 (RGKK…VKTR) and 599 to 620 (SASK…PYKP). RCC1 repeat units lie at residues 591–646 (DGSV…IVTK), 690–746 (SGEV…MMCQ), 943–993 (NGDV…VLLM), and 995–1051 (GQVF…LRID). Over residues 611–620 (SRRQPKPYKP) the composition is skewed to basic residues. C1733 and C1850 are disulfide-bonded. 2 disordered regions span residues 1976–1998 (APPT…EQGL) and 2313–2332 (LQRL…LTFG). 2 stretches are compositionally biased toward polar residues: residues 1981-1998 (NPNQ…EQGL) and 2317-2328 (PGTSSNSATGTD). The Filamin repeat unit spans residues 2336–2417 (APKLEATYEP…IHVTIDGIEI (82 aa)). 5 disordered regions span residues 2613–2824 (GFDY…PSPH), 2845–2922 (SNDE…KQAM), 3085–3116 (SPGS…KAEV), 3345–3365 (PGSN…TDSD), and 3505–3526 (FETE…EQEK). Basic and acidic residues-rich tracts occupy residues 2639–2663 (HRQE…KSKN) and 2678–2688 (DTGKLRSDSHS). A compositionally biased stretch (polar residues) spans 2716-2729 (NPGSRSSSPKQKTF). Low complexity predominate over residues 2730–2745 (TSGRSSPSSTSSPRSS). Composition is skewed to basic and acidic residues over residues 2761 to 2772 (VHLDPPRERSKS), 2854 to 2864 (SELHNAEEGSS), and 2874 to 2883 (PVKEELESRS). Composition is skewed to basic residues over residues 2887-2900 (VSRK…RPKK) and 3102-3111 (KKTKKEKKKK). Residues 3515-3526 (NKGNKENLEQEK) are compositionally biased toward basic and acidic residues. The DOC domain maps to 3617-3795 (FNISVQSGYE…SVAQQKNCEA (179 aa)). The tract at residues 3815 to 3841 (GDAEPTPEQEEKNLLSSPEGEDKAPSD) is disordered. Residues C4324, C4327, C4342, H4344, H4347, C4350, C4371, C4374, C4440, and C4443 each coordinate Zn(2+). Residues 4324 to 4375 (CMICFTEALSAAPAIQLDCSHVFHLQCTRRVLENRWLGPRITFGFMSCPICK) form an RING-type; atypical zinc finger. The interval 4435 to 4572 (YAYYVCFKCK…LGCGVCRNAH (138 aa)) is tandem cysteine domain. C4454 is a catalytic residue. C4471, C4474, C4483, H4486, C4495, C4498, and C4499 together coordinate Zn(2+). C4506 is an active-site residue. Zn(2+) contacts are provided by C4513, C4516, C4534, C4548, H4554, C4565, and C4568.

This sequence belongs to the RING-Cys relay (RCR) family. As to expression, widely expressed when the visual system begins developing. In the eye, expressed in all cells, including retinal ganglion cells, with no obvious gradient.

The protein resides in the nucleus. Its subcellular location is the cell projection. It localises to the axon. The protein localises to the cytoplasm. It is found in the cytoskeleton. It carries out the reaction [E2 ubiquitin-conjugating enzyme]-S-ubiquitinyl-L-cysteine + [acceptor protein]-L-threonine = [E2 ubiquitin-conjugating enzyme]-L-cysteine + [acceptor protein]-3-O-ubiquitinyl-L-threonine.. Its pathway is protein modification; protein ubiquitination. Atypical E3 ubiquitin-protein ligase which specifically mediates ubiquitination of threonine and serine residues on target proteins, instead of ubiquitinating lysine residues. Shows esterification activity towards both threonine and serine, with a preference for threonine, and acts via two essential catalytic cysteine residues that relay ubiquitin to its substrate via thioester intermediates. Interacts with the E2 enzymes UBE2D1, UBE2D3, UBE2E1 and UBE2L3. Plays a key role in neural development, probably by mediating ubiquitination of threonine residues on target proteins. Involved in different processes such as regulation of neurite outgrowth, synaptic growth, synaptogenesis and axon degeneration. Required in the visual system for correct fasciculation, targeting and mapping of retinal axons. Acts as a regulator of pteridine synthesis. May play a role in the regulation of the circadian clock gene expression. The polypeptide is E3 ubiquitin-protein ligase MYCBP2 (Danio rerio (Zebrafish)).